A 384-amino-acid polypeptide reads, in one-letter code: Substance-K receptor (384 aa).

The Extracellular segment spans residues 1–32; the sequence is MGAHAIVTDANISSSLENNTTGITAFSMPGWQ. Residues asparagine 11, asparagine 18, and asparagine 19 are each glycosylated (N-linked (GlcNAc...) asparagine). A helical membrane pass occupies residues 33 to 56; that stretch reads LALWATAYLVLVLVAVTGNATVIW. The Cytoplasmic segment spans residues 57-69; the sequence is IILAHQRMRTVTN. A helical membrane pass occupies residues 70–90; the sequence is YFIVNLALADLCMAAFNAAFN. The Extracellular portion of the chain corresponds to 91–107; that stretch reads FVYASHNIWYFGRAFCH. Cysteine 106 and cysteine 181 are oxidised to a cystine. A helical membrane pass occupies residues 108-129; sequence FQNLFPITAMFVSIYSMTAIAA. Residues 130-149 lie on the Cytoplasmic side of the membrane; sequence DRYVAIVHPFQPRLSAPGTR. Residues 150–170 traverse the membrane as a helical segment; sequence AVIAGIWLLALALAFPQCFYS. Topologically, residues 171–196 are extracellular; that stretch reads TITMDQGATKCVVVWPEDNGSKMLLL. A helical transmembrane segment spans residues 197 to 218; the sequence is YHLVVIALIYVLPLLVMLLAYS. Residues 219–251 are Cytoplasmic-facing; that stretch reads VIGLTLWRREVPRHQVHGASLRHLRAKKKFVKT. A helical transmembrane segment spans residues 252–272; the sequence is MVLVVVTFAICWLPYHFYFIL. The Extracellular segment spans residues 273 to 290; sequence GSFQEDIYYHKFIQQVYL. Residues 291–310 form a helical membrane-spanning segment; it reads ALFWLAMSSTMYNPIIYCCL. The Cytoplasmic portion of the chain corresponds to 311–384; it reads NHRFRSGFRL…GPQDGLPDEP (74 aa). The S-palmitoyl cysteine moiety is linked to residue cysteine 324.

The protein belongs to the G-protein coupled receptor 1 family.

It is found in the cell membrane. Functionally, this is a receptor for the tachykinin neuropeptide substance K (neurokinin A). It is associated with G proteins that activate a phosphatidylinositol-calcium second messenger system. The protein is Substance-K receptor (TACR2) of Canis lupus familiaris (Dog).